The primary structure comprises 188 residues: MSIKSDKWIRRMAEQHGMIEPFAPGQVREQDGRKIVSYGTSSYGYDIRCADEFKIFTNINSTIVDPKNFDEKSFVDFKGDVCIIPPNSFALARTMEYFRIPRSVLTICLGKSTYARCGIIVNVTPFEPEWEGYVTLEFSNTTPLPAKIYAGEGCAQVLFFESDEVCETSYRDRGGKYQGQHGVTLPKT.

Residues 111 to 116, 135 to 137, glutamine 156, tyrosine 170, and glutamine 180 contribute to the dCTP site; these read KSTYAR and TLE. Residue glutamate 137 is the Proton donor/acceptor of the active site.

This sequence belongs to the dCTP deaminase family. As to quaternary structure, homotrimer.

It catalyses the reaction dCTP + H2O + H(+) = dUTP + NH4(+). It functions in the pathway pyrimidine metabolism; dUMP biosynthesis; dUMP from dCTP (dUTP route): step 1/2. Catalyzes the deamination of dCTP to dUTP. The protein is dCTP deaminase of Cupriavidus necator (strain ATCC 17699 / DSM 428 / KCTC 22496 / NCIMB 10442 / H16 / Stanier 337) (Ralstonia eutropha).